The following is a 536-amino-acid chain: Subtilisin-like proteinase Spm1 (536 aa).

Residues 1-15 (MKSVILLSLAACAVA) form the signal peptide. Residues 16-147 (APTAGVETIH…RYEEVKKDEC (132 aa)) constitute a propeptide that is removed on maturation. The region spanning 44–137 (YIIKFKKHVD…IERDTIVHTM (94 aa)) is the Inhibitor I9 domain. The region spanning 156-462 (PWGLSRVSHR…GGCSNYFEIV (307 aa)) is the Peptidase S8 domain. Residues Asp192 and His224 each act as charge relay system in the active site. N-linked (GlcNAc...) asparagine glycans are attached at residues Asn254 and Asn294. Ser390 serves as the catalytic Charge relay system.

It belongs to the peptidase S8 family.

The protein resides in the vacuole. The protein is Subtilisin-like proteinase Spm1 (SPM1) of Pyricularia oryzae (strain 70-15 / ATCC MYA-4617 / FGSC 8958) (Rice blast fungus).